The following is a 264-amino-acid chain: Methionine aminopeptidase (264 aa).

Residue H79 participates in substrate binding. Residues D97, D108, and H171 each contribute to the a divalent metal cation site. H178 contributes to the substrate binding site. A divalent metal cation is bound by residues E204 and E235.

Belongs to the peptidase M24A family. Methionine aminopeptidase type 1 subfamily. Monomer. It depends on Co(2+) as a cofactor. Zn(2+) is required as a cofactor. Requires Mn(2+) as cofactor. Fe(2+) serves as cofactor.

It catalyses the reaction Release of N-terminal amino acids, preferentially methionine, from peptides and arylamides.. Removes the N-terminal methionine from nascent proteins. The N-terminal methionine is often cleaved when the second residue in the primary sequence is small and uncharged (Met-Ala-, Cys, Gly, Pro, Ser, Thr, or Val). Requires deformylation of the N(alpha)-formylated initiator methionine before it can be hydrolyzed. The polypeptide is Methionine aminopeptidase (Salmonella typhi).